The primary structure comprises 161 residues: Large ribosomal subunit protein uL15 (161 aa).

A disordered region spans residues 1–43 (MKLSEISDNPGARKKRMRIGRGIGSGKGKTGGRGGKGQTARSG). Residues 21-37 (RGIGSGKGKTGGRGGKG) show a composition bias toward gly residues.

This sequence belongs to the universal ribosomal protein uL15 family. Part of the 50S ribosomal subunit.

Its function is as follows. Binds to the 23S rRNA. The sequence is that of Large ribosomal subunit protein uL15 from Rhodopseudomonas palustris (strain BisB5).